Reading from the N-terminus, the 270-residue chain is Undecaprenyl-diphosphatase (270 aa).

Helical transmembrane passes span 14–34, 40–60, 88–108, 117–137, 146–166, 189–209, 221–241, and 249–269; these read GLTE…PTFL, GITF…LYFW, FYII…ETTI, SLIA…DTSG, ITLK…IPGV, FSFL…LSGL, PLLI…AFLL, and LYPF…FINF.

The protein belongs to the UppP family.

The protein localises to the cell inner membrane. It carries out the reaction di-trans,octa-cis-undecaprenyl diphosphate + H2O = di-trans,octa-cis-undecaprenyl phosphate + phosphate + H(+). Functionally, catalyzes the dephosphorylation of undecaprenyl diphosphate (UPP). Confers resistance to bacitracin. This is Undecaprenyl-diphosphatase from Geotalea daltonii (strain DSM 22248 / JCM 15807 / FRC-32) (Geobacter daltonii).